Consider the following 160-residue polypeptide: tRNA (cytidine(34)-2'-O)-methyltransferase (160 aa).

The S-adenosyl-L-methionine site is built by leucine 78, glycine 100, isoleucine 122, and serine 130.

It belongs to the class IV-like SAM-binding methyltransferase superfamily. RNA methyltransferase TrmH family. TrmL subfamily. Homodimer.

It localises to the cytoplasm. It carries out the reaction cytidine(34) in tRNA + S-adenosyl-L-methionine = 2'-O-methylcytidine(34) in tRNA + S-adenosyl-L-homocysteine + H(+). It catalyses the reaction 5-carboxymethylaminomethyluridine(34) in tRNA(Leu) + S-adenosyl-L-methionine = 5-carboxymethylaminomethyl-2'-O-methyluridine(34) in tRNA(Leu) + S-adenosyl-L-homocysteine + H(+). Functionally, methylates the ribose at the nucleotide 34 wobble position in the two leucyl isoacceptors tRNA(Leu)(CmAA) and tRNA(Leu)(cmnm5UmAA). Catalyzes the methyl transfer from S-adenosyl-L-methionine to the 2'-OH of the wobble nucleotide. The polypeptide is tRNA (cytidine(34)-2'-O)-methyltransferase (Haemophilus influenzae (strain ATCC 51907 / DSM 11121 / KW20 / Rd)).